The chain runs to 254 residues: Agamous-like MADS-box protein AGL9 homolog (254 aa).

Residues 3–57 (RGRVELKRIENKINRQVTFAKRRNGLLKKAYELSVLCDAEVALIIFSNRGKLYEF) form the MADS-box domain. The region spanning 91–181 (ELSSQQEYLK…RLRLADGYQM (91 aa)) is the K-box domain.

It is found in the nucleus. Functionally, probable transcription factor active in inflorescence development and floral organogenesis. This chain is Agamous-like MADS-box protein AGL9 homolog (AGL9), found in Sinapis alba (White mustard).